Reading from the N-terminus, the 96-residue chain is HssA/B-like protein 25 (96 aa).

It belongs to the hssA/B family.

This is HssA/B-like protein 25 (hssl25) from Dictyostelium discoideum (Social amoeba).